A 1032-amino-acid chain; its full sequence is Error-prone DNA polymerase (1032 aa).

This sequence belongs to the DNA polymerase type-C family. DnaE2 subfamily.

The protein localises to the cytoplasm. It catalyses the reaction DNA(n) + a 2'-deoxyribonucleoside 5'-triphosphate = DNA(n+1) + diphosphate. DNA polymerase involved in damage-induced mutagenesis and translesion synthesis (TLS). It is not the major replicative DNA polymerase. The sequence is that of Error-prone DNA polymerase from Hahella chejuensis (strain KCTC 2396).